A 546-amino-acid polypeptide reads, in one-letter code: Membrane protein insertase YidC (546 aa).

The chain crosses the membrane as a helical span at residues 6-26 (LILFIVFSFSLLLLWEAWQDK). Positions 31–56 (PATRPVAGAPAGSAAPTPSTALNAPA) are disordered. Residues 37–56 (AGAPAGSAAPTPSTALNAPA) show a composition bias toward low complexity. 4 helical membrane passes run 351–371 (LVGNWGWAIIILTILIKLALY), 425–445 (LPILIQIPVFIALYWVLLAAV), 465–482 (WYILPIIMGVTSILQVKL), and 494–514 (IMMIMPVAFTVMFVFFPAGLV).

It belongs to the OXA1/ALB3/YidC family. Type 1 subfamily. Interacts with the Sec translocase complex via SecD. Specifically interacts with transmembrane segments of nascent integral membrane proteins during membrane integration.

It is found in the cell inner membrane. Its function is as follows. Required for the insertion and/or proper folding and/or complex formation of integral membrane proteins into the membrane. Involved in integration of membrane proteins that insert both dependently and independently of the Sec translocase complex, as well as at least some lipoproteins. Aids folding of multispanning membrane proteins. The chain is Membrane protein insertase YidC from Thiobacillus denitrificans (strain ATCC 25259 / T1).